A 382-amino-acid chain; its full sequence is Homoserine O-acetyltransferase (382 aa).

The interval 1–20 (MSTDQSPCPSATGAELLPPP) is disordered. Residues 59-363 (NVVLVEHALT…RDGHDGFLTE (305 aa)) form the AB hydrolase-1 domain. Ser164 (nucleophile) is an active-site residue. Arg234 contributes to the substrate binding site. Active-site residues include Asp327 and His357. A substrate-binding site is contributed by Asp358.

This sequence belongs to the AB hydrolase superfamily. MetX family. Homodimer.

It localises to the cytoplasm. It catalyses the reaction L-homoserine + acetyl-CoA = O-acetyl-L-homoserine + CoA. The protein operates within amino-acid biosynthesis; L-methionine biosynthesis via de novo pathway; O-acetyl-L-homoserine from L-homoserine: step 1/1. Functionally, transfers an acetyl group from acetyl-CoA to L-homoserine, forming acetyl-L-homoserine. The chain is Homoserine O-acetyltransferase from Nocardia farcinica (strain IFM 10152).